The following is a 94-amino-acid chain: Pyrimidine/purine nucleoside phosphorylase (94 aa).

The protein belongs to the nucleoside phosphorylase PpnP family.

It catalyses the reaction a purine D-ribonucleoside + phosphate = a purine nucleobase + alpha-D-ribose 1-phosphate. The enzyme catalyses adenosine + phosphate = alpha-D-ribose 1-phosphate + adenine. It carries out the reaction cytidine + phosphate = cytosine + alpha-D-ribose 1-phosphate. The catalysed reaction is guanosine + phosphate = alpha-D-ribose 1-phosphate + guanine. It catalyses the reaction inosine + phosphate = alpha-D-ribose 1-phosphate + hypoxanthine. The enzyme catalyses thymidine + phosphate = 2-deoxy-alpha-D-ribose 1-phosphate + thymine. It carries out the reaction uridine + phosphate = alpha-D-ribose 1-phosphate + uracil. The catalysed reaction is xanthosine + phosphate = alpha-D-ribose 1-phosphate + xanthine. In terms of biological role, catalyzes the phosphorolysis of diverse nucleosides, yielding D-ribose 1-phosphate and the respective free bases. Can use uridine, adenosine, guanosine, cytidine, thymidine, inosine and xanthosine as substrates. Also catalyzes the reverse reactions. This Salmonella typhimurium (strain LT2 / SGSC1412 / ATCC 700720) protein is Pyrimidine/purine nucleoside phosphorylase.